A 673-amino-acid polypeptide reads, in one-letter code: MLKELRNIGIIAHIDAGKTTTTERILYYTGLTHKMGETHDGDSIMDFLPWEKERGITVASAATRCFWKGNTINIIDTPGHVDFTAEVERSLRILDGAVVIFCGKGGVEPQSETVWRQADKYQIPRIAYVNKMDAVGADFFRVIEQIKQRLGSNPLVISLPVFKEECFSGIIDLIKMKYYTFAGKLGNDIAEESIPSEYTETAEEWRSVLVEKLAETDETLLDLYYNNEEIDAGLLSRVIRTNTVSGNMVPVCCGSSYRNIGVQLLLDSIVDYLPSPLDLPGSKAVIMETTETINIMPDSQDAFSALVFKIINDRHVGRLAFARIYSGKLKAGTVVFNSSKNKRERVGRLLRIHAEHREEINEVAAGDIVAIIGLKDIGTGDTLCSENFPLLLETIDFPQPVIQIAIEPKNQAGLDKISEALNRISAEDPTFKISYNKETGQVLLAGMGELHLEIVAERLAREFKLDFNTGQPQVAYRETIGKSAEQVTRYVKQTGGKGQFAHVVLRLEPGEGFEFINRISQGSIPREYIPAVESGIKQALEEGVLKGYPVVNVKATLLDGSFHEVDSSEMAFRTAAFLATRECLKKAHPRMLEPVMRLEIVSPEEYTGNIINNITNRRGKLESLEMENHTQIIRGCVPLAELFGYSTVLRSLTQGRAGFSMEFSHYEERHLAS.

The tr-type G domain maps to 3–277 (KELRNIGIIA…SIVDYLPSPL (275 aa)). GTP contacts are provided by residues 12–19 (AHIDAGKT), 76–80 (DTPGH), and 130–133 (NKMD).

This sequence belongs to the TRAFAC class translation factor GTPase superfamily. Classic translation factor GTPase family. EF-G/EF-2 subfamily.

It localises to the cytoplasm. Functionally, catalyzes the GTP-dependent ribosomal translocation step during translation elongation. During this step, the ribosome changes from the pre-translocational (PRE) to the post-translocational (POST) state as the newly formed A-site-bound peptidyl-tRNA and P-site-bound deacylated tRNA move to the P and E sites, respectively. Catalyzes the coordinated movement of the two tRNA molecules, the mRNA and conformational changes in the ribosome. In Syntrophomonas wolfei subsp. wolfei (strain DSM 2245B / Goettingen), this protein is Elongation factor G 1.